Consider the following 218-residue polypeptide: Adenylate kinase (218 aa).

Glycine 10–threonine 15 lines the ATP pocket. Positions serine 30–valine 59 are NMP. Residues threonine 31, arginine 36, glutamate 57–valine 59, glycine 85–arginine 88, and glutamine 92 contribute to the AMP site. The segment at glycine 126 to aspartate 164 is LID. Arginine 127 provides a ligand contact to ATP. Positions 130 and 133 each coordinate Zn(2+). Threonine 136 to tyrosine 137 lines the ATP pocket. Residues cysteine 150 and cysteine 153 each contribute to the Zn(2+) site. Residues arginine 161 and arginine 172 each coordinate AMP. Glutamine 200 provides a ligand contact to ATP.

The protein belongs to the adenylate kinase family. In terms of assembly, monomer.

The protein resides in the cytoplasm. It catalyses the reaction AMP + ATP = 2 ADP. It functions in the pathway purine metabolism; AMP biosynthesis via salvage pathway; AMP from ADP: step 1/1. Catalyzes the reversible transfer of the terminal phosphate group between ATP and AMP. Plays an important role in cellular energy homeostasis and in adenine nucleotide metabolism. This chain is Adenylate kinase, found in Latilactobacillus sakei subsp. sakei (strain 23K) (Lactobacillus sakei subsp. sakei).